Reading from the N-terminus, the 218-residue chain is Ras-related protein Rab-11B (218 aa).

The residue at position 2 (Gly-2) is an N-acetylglycine. Residue Arg-4 is modified to Citrulline. GTP contacts are provided by Ser-20, Gly-21, Gly-23, Lys-24, Ser-25, Asn-26, Asn-37, Leu-38, Ser-40, Ser-42, and Thr-43. Ser-25 contacts Mg(2+). The short motif at 36–47 (FNLESKSTIGVE) is the Switch 1 element. The Mg(2+) site is built by Thr-43 and Asp-66. The Switch 2 motif lies at 67–86 (TAGQERYRAITSAYYRGAVG). GTP-binding residues include Gly-69, Asn-124, Lys-125, Asp-127, Ala-155, and Leu-156. The disordered stretch occupies residues 184–218 (RAAHDESPGNNVVDISVPPTTDGQKPNKLQCCQNL). Residues Cys-214 and Cys-215 are each lipidated (S-geranylgeranyl cysteine). Position 215 is a cysteine methyl ester (Cys-215). A propeptide spans 216 to 218 (QNL) (removed in mature form).

The protein belongs to the small GTPase superfamily. Rab family. As to quaternary structure, interacts with KCNMA1. Interacts with RAB11FIP1, RAB11FIP2, RAB11FIP3 and RAB11FIP4. May interact with TBC1D14. Interacts with ATP6V1E1. Interacts with PI4KB. Interacts (GDP-bound form) with ZFYVE27. Interacts (GDP-bound form) with KIF5A in a ZFYVE27-dependent manner. Interacts with RELCH. Interacts (in GTP-bound form) with TBC1D8B (via domain Rab-GAP TBC). Forms a complex containing RAB11B, ASAP1, Rabin8/RAB3IP, RAP11FIP3 and ARF4. Interacts with WDR44. Mg(2+) serves as cofactor. Post-translationally, citrullinated by PADI4. (Microbial infection) Glycosylated on arginine residues by S.typhimurium protein Ssek3.

The protein resides in the recycling endosome membrane. Its subcellular location is the cytoplasmic vesicle. The protein localises to the secretory vesicle. It localises to the synaptic vesicle membrane. It is found in the phagosome membrane. The enzyme catalyses GTP + H2O = GDP + phosphate + H(+). Its activity is regulated as follows. Regulated by guanine nucleotide exchange factors (GEFs) which promote the exchange of bound GDP for free GTP. Regulated by GTPase activating proteins (GAPs) which increase the GTP hydrolysis activity. Inhibited by GDP dissociation inhibitors (GDIs) which prevent Rab-GDP dissociation. In terms of biological role, the small GTPases Rab are key regulators of intracellular membrane trafficking, from the formation of transport vesicles to their fusion with membranes. Rabs cycle between an inactive GDP-bound form and an active GTP-bound form that is able to recruit to membranes different set of downstream effectors directly responsible for vesicle formation, movement, tethering and fusion. The small Rab GTPase RAB11B plays a role in endocytic recycling, regulating apical recycling of several transmembrane proteins including cystic fibrosis transmembrane conductance regulator/CFTR, epithelial sodium channel/ENaC, potassium voltage-gated channel, and voltage-dependent L-type calcium channel. May also regulate constitutive and regulated secretion, like insulin granule exocytosis. Required for melanosome transport and release from melanocytes. Also regulates V-ATPase intracellular transport in response to extracellular acidosis. Promotes Rabin8/RAB3IP preciliary vesicular trafficking to mother centriole by forming a ciliary targeting complex containing Rab11, ASAP1, Rabin8/RAB3IP, RAB11FIP3 and ARF4, thereby regulating ciliogenesis initiation. On the contrary, upon LPAR1 receptor signaling pathway activation, interaction with phosphorylated WDR44 prevents Rab11-RAB3IP-RAB11FIP3 complex formation and cilia growth. The chain is Ras-related protein Rab-11B from Homo sapiens (Human).